Reading from the N-terminus, the 237-residue chain is Uridylate kinase (237 aa).

12 to 15 (KLSG) contributes to the ATP binding site. The segment at 20-25 (GAEGFG) is involved in allosteric activation by GTP. Glycine 54 is a binding site for UMP. Residues glycine 55 and arginine 59 each contribute to the ATP site. UMP-binding positions include aspartate 74 and 135 to 142 (TGSPFFTT). Threonine 162, tyrosine 168, and aspartate 171 together coordinate ATP.

The protein belongs to the UMP kinase family. Homohexamer.

The protein localises to the cytoplasm. It catalyses the reaction UMP + ATP = UDP + ADP. The protein operates within pyrimidine metabolism; CTP biosynthesis via de novo pathway; UDP from UMP (UMPK route): step 1/1. Allosterically activated by GTP. Inhibited by UTP. Catalyzes the reversible phosphorylation of UMP to UDP. The protein is Uridylate kinase of Actinobacillus succinogenes (strain ATCC 55618 / DSM 22257 / CCUG 43843 / 130Z).